Reading from the N-terminus, the 451-residue chain is Phosphoglucosamine mutase (451 aa).

Catalysis depends on Ser102, which acts as the Phosphoserine intermediate. Ser102, Asp243, Asp245, and Asp247 together coordinate Mg(2+). At Ser102 the chain carries Phosphoserine.

Belongs to the phosphohexose mutase family. Mg(2+) serves as cofactor. Post-translationally, activated by phosphorylation.

It catalyses the reaction alpha-D-glucosamine 1-phosphate = D-glucosamine 6-phosphate. Catalyzes the conversion of glucosamine-6-phosphate to glucosamine-1-phosphate. This is Phosphoglucosamine mutase from Salinispora tropica (strain ATCC BAA-916 / DSM 44818 / JCM 13857 / NBRC 105044 / CNB-440).